Here is a 205-residue protein sequence, read N- to C-terminus: Ephrin-A1 (205 aa).

Residues 1–18 form the signal peptide; the sequence is MEFFWASLLGLCCSLAAA. The region spanning 19 to 151 is the Ephrin RBD domain; that stretch reads NRHTVFWNSS…RLKVMIAGKI (133 aa). Residue N26 is glycosylated (N-linked (GlcNAc...) asparagine). 2 disulfide bridges follow: C51–C92 and C80–C140. The GPI-anchor amidated serine moiety is linked to residue S182. The propeptide at 183–205 is removed in mature form; that stretch reads AAPRLFPLAWAVLLLPFLLLQIP.

This sequence belongs to the ephrin family. As to quaternary structure, monomer. Homodimer. Forms heterodimers with EPHA2. Binds to the receptor tyrosine kinases EPHA2, EPHA3, EPHA4, EPHA5, EPHA6 and EPHA7. Also binds with low affinity to EPHA1. Undergoes proteolysis by a metalloprotease to give rise to a soluble monomeric form. Post-translationally, N-Glycosylation is required for binding to EPHA2 receptor and inducing its internalization.

It is found in the cell membrane. It localises to the secreted. Cell surface GPI-bound ligand for Eph receptors, a family of receptor tyrosine kinases which are crucial for migration, repulsion and adhesion during neuronal, vascular and epithelial development. Binds promiscuously Eph receptors residing on adjacent cells, leading to contact-dependent bidirectional signaling into neighboring cells. Plays an important role in angiogenesis and tumor neovascularization. The recruitment of VAV2, VAV3 and PI3-kinase p85 subunit by phosphorylated EPHA2 is critical for EFNA1-induced RAC1 GTPase activation and vascular endothelial cell migration and assembly. Exerts anti-oncogenic effects in tumor cells through activation and down-regulation of EPHA2. Activates EPHA2 by inducing tyrosine phosphorylation which leads to its internalization and degradation. Acts as a negative regulator in the tumorigenesis of gliomas by down-regulating EPHA2 and FAK. Can evoke collapse of embryonic neuronal growth cone and regulates dendritic spine morphogenesis. This Bos taurus (Bovine) protein is Ephrin-A1 (EFNA1).